A 270-amino-acid polypeptide reads, in one-letter code: tRNA pseudouridine synthase A (270 aa).

Asp52 functions as the Nucleophile in the catalytic mechanism. Tyr110 contributes to the substrate binding site.

Belongs to the tRNA pseudouridine synthase TruA family. Homodimer.

The enzyme catalyses uridine(38/39/40) in tRNA = pseudouridine(38/39/40) in tRNA. Functionally, formation of pseudouridine at positions 38, 39 and 40 in the anticodon stem and loop of transfer RNAs. This chain is tRNA pseudouridine synthase A, found in Roseiflexus castenholzii (strain DSM 13941 / HLO8).